Reading from the N-terminus, the 216-residue chain is 7-carboxy-7-deazaguanine synthase (216 aa).

Residues 12–14 and R27 each bind substrate; that span reads LQG. The region spanning 18-216 is the Radical SAM core domain; it reads RAGRAAVFCR…LQTHKYLGIP (199 aa). C31, C46, and C49 together coordinate [4Fe-4S] cluster. Residue T51 coordinates Mg(2+). T93 contacts substrate. S-adenosyl-L-methionine is bound by residues G95, 136-138, and 176-179; these read SPK and QPRD. P216 provides a ligand contact to substrate.

It belongs to the radical SAM superfamily. 7-carboxy-7-deazaguanine synthase family. As to quaternary structure, homodimer. It depends on [4Fe-4S] cluster as a cofactor. S-adenosyl-L-methionine serves as cofactor. Mg(2+) is required as a cofactor.

The catalysed reaction is 6-carboxy-5,6,7,8-tetrahydropterin + H(+) = 7-carboxy-7-deazaguanine + NH4(+). Its pathway is purine metabolism; 7-cyano-7-deazaguanine biosynthesis. Its function is as follows. Catalyzes the complex heterocyclic radical-mediated conversion of 6-carboxy-5,6,7,8-tetrahydropterin (CPH4) to 7-carboxy-7-deazaguanine (CDG), a step common to the biosynthetic pathways of all 7-deazapurine-containing compounds. This chain is 7-carboxy-7-deazaguanine synthase, found in Nitratidesulfovibrio vulgaris (strain ATCC 29579 / DSM 644 / CCUG 34227 / NCIMB 8303 / VKM B-1760 / Hildenborough) (Desulfovibrio vulgaris).